The chain runs to 78 residues: MKTSVRIGAFEIDDGELHGESPGDRTLTIPCKSDPDLCMQLDAWDAETSIPALLNGEHSVLYRTRYDQQSDAWIMRLA.

This is an uncharacterized protein from Escherichia coli O6:H1 (strain CFT073 / ATCC 700928 / UPEC).